A 377-amino-acid polypeptide reads, in one-letter code: tRNA(Met) cytidine acetate ligase (377 aa).

ATP is bound by residues 7-20 (VTEY…HLYH), G100, N153, and R178.

Belongs to the TmcAL family.

It localises to the cytoplasm. It carries out the reaction cytidine(34) in elongator tRNA(Met) + acetate + ATP = N(4)-acetylcytidine(34) in elongator tRNA(Met) + AMP + diphosphate. In terms of biological role, catalyzes the formation of N(4)-acetylcytidine (ac(4)C) at the wobble position of elongator tRNA(Met), using acetate and ATP as substrates. First activates an acetate ion to form acetyladenylate (Ac-AMP) and then transfers the acetyl group to tRNA to form ac(4)C34. In Staphylococcus saprophyticus subsp. saprophyticus (strain ATCC 15305 / DSM 20229 / NCIMB 8711 / NCTC 7292 / S-41), this protein is tRNA(Met) cytidine acetate ligase.